We begin with the raw amino-acid sequence, 732 residues long: Protein DIA2 (732 aa).

3 TPR repeats span residues 15-48 (VLKA…CDSY), 78-111 (IKIL…EPGN), and 113-145 (KCYI…CNND). Residues 204–251 (TDLVGNLPIEILPIIFQRFTTKELVTLSLVCNKWRDKILYHLDCFQEF) enclose the F-box domain. Phosphoserine is present on serine 393. LRR repeat units follow at residues 425–449 (LEKI…LLRG), 480–505 (FPDL…LLKF), 509–532 (WKNL…DEDQ), 550–574 (LQNL…LCEQ), 579–602 (GRKL…HAHT), 616–637 (LSKL…TMKS), and 645–669 (LENL…EFLK).

The protein belongs to the DIA2 family. Component of the SCF(DIA2) complex containing CDC53, SKP1, RBX1 and DIA2. Interacts with SKP1.

It is found in the nucleus. Functionally, F-box protein component of a SCF (SKP1-CUL1-F-box protein) E3 ubiquitin-protein ligase complex which mediates the ubiquitination and subsequent proteasomal degradation of target proteins. Probably recognizes and binds to phosphorylated target proteins. The SCF(DIA2) complex is specifically involved in the pheromone induced degradation of phosphorylated TEC1. The SCF(DIA2) complex binds to DNA replication origins. Involved in DNA replication, genome stability, and the control of cell cycle, probably through its association to replication origins to facilitate the ubiquitination of another origin-binding protein. Required for invasive growth and growth under alkaline conditions. This Saccharomyces cerevisiae (strain ATCC 204508 / S288c) (Baker's yeast) protein is Protein DIA2 (DIA2).